Reading from the N-terminus, the 2041-residue chain is Fanconi anemia group M protein (2041 aa).

Residues 1–64 form a disordered region; sequence MSGGRQRTLP…PNPGPGPEAA (64 aa). Pro residues predominate over residues 48-60; it reads DPNPNVDPNPGPG. Residues 91 to 259 form the Helicase ATP-binding domain; that stretch reads MARAALFANT…QVVSNLLIAQ (169 aa). 104–111 is a binding site for ATP; it reads LPTGLGKT. Residues 207–210 carry the DEAH box motif; the sequence is DEAH. Residues 447–631 form the Helicase C-terminal domain; it reads KLEEIVIEHF…HSPRMIPEGI (185 aa). The segment covering 802–814 has biased composition (polar residues); that stretch reads HLSTTSSAFAQKT. 7 disordered regions span residues 802–822, 848–874, 1070–1124, 1158–1208, 1301–1403, 1465–1491, and 1685–1740; these read HLST…RDMA, TKTP…SEPC, KPAS…SEMK, LLRL…AWGR, STPL…ENLE, VSDV…SAAG, and DSSG…SAES. The span at 1170–1181 shows a compositional bias: low complexity; it reads PSAGPASQQPPS. Over residues 1319 to 1329 the composition is skewed to gly residues; it reads GTAGGRTGRGS. A compositionally biased stretch (polar residues) spans 1375-1389; it reads VNPNSQRNSFGSSAS. The span at 1685–1697 shows a compositional bias: polar residues; sequence DSSGEETNVSNEK.

The protein belongs to the DEAD box helicase family. DEAH subfamily. FANCM sub-subfamily. As to quaternary structure, component of the Fanconi anemia (FA) core complex. The FA core complex associates with Bloom syndrome (BLM) complex. This supercomplex between FA and BLM complexes has been called BRAFT. Post-translationally, phosphorylated; hyperphosphorylated in response to genotoxic stress.

It localises to the nucleus. The catalysed reaction is ATP + H2O = ADP + phosphate + H(+). Functionally, DNA-dependent ATPase component of the Fanconi anemia (FA) core complex. Required for the normal activation of the FA pathway, leading to monoubiquitination of the FANCI-FANCD2 complex in response to DNA damage, cellular resistance to DNA cross-linking drugs, and prevention of chromosomal breakage. In complex with CENPS and CENPX, binds double-stranded DNA (dsDNA), fork-structured DNA (fsDNA) and Holliday junction substrates. Its ATP-dependent DNA branch migration activity can process branched DNA structures such as a movable replication fork. This activity is strongly stimulated in the presence of CENPS and CENPX. In complex with FAAP24, efficiently binds to single-strand DNA (ssDNA), splayed-arm DNA, and 3'-flap substrates. In vitro, on its own, strongly binds ssDNA oligomers and weakly fsDNA, but does not bind to dsDNA. This Gallus gallus (Chicken) protein is Fanconi anemia group M protein (FANCM).